Consider the following 539-residue polypeptide: Probable transcription factor GLK2 (539 aa).

Residues 86–218 are disordered; that stretch reads FASSPDDEPP…NSHGKRKVKV (133 aa). Composition is skewed to low complexity over residues 99–111 and 121–130; these read SAPG…AAAG and AAAAAAAAAA. Positions 144-161 are enriched in basic and acidic residues; sequence KKDDEERSSSLPEEKDAK. The 60-residue stretch at 212–271 folds into the HTH myb-type domain; sequence GKRKVKVDWTPELHRRFVQAVEQLGIDKAVPSRILELMGIECLTRHNIASHLQKYRSHRK. The segment at residues 242–267 is a DNA-binding region (H-T-H motif); the sequence is PSRILELMGIECLTRHNIASHLQKYR.

Expressed in leaves.

It localises to the nucleus. Functionally, probable transcriptional activator that promotes chloroplast development. Acts as an activator of nuclear photosynthetic genes involved in chlorophyll biosynthesis, light harvesting, and electron transport. The protein is Probable transcription factor GLK2 (GLK2) of Oryza sativa subsp. japonica (Rice).